We begin with the raw amino-acid sequence, 36 residues long: Protein P4 (36 aa).

The helical transmembrane segment at 13–33 (GLQLSLLICACLLAVLIVSFC) threads the bilayer.

The protein resides in the host membrane. This is Protein P4 from Vitis vinifera (Grape).